Consider the following 322-residue polypeptide: Quinolinate synthase (322 aa).

Iminosuccinate is bound by residues histidine 38 and serine 55. Cysteine 100 serves as a coordination point for [4Fe-4S] cluster. Iminosuccinate is bound by residues 126–128 (YIN) and serine 143. Position 186 (cysteine 186) interacts with [4Fe-4S] cluster. Iminosuccinate contacts are provided by residues 212 to 214 (HPE) and threonine 229. Cysteine 279 serves as a coordination point for [4Fe-4S] cluster.

The protein belongs to the quinolinate synthase family. Type 2 subfamily. It depends on [4Fe-4S] cluster as a cofactor.

It localises to the cytoplasm. The enzyme catalyses iminosuccinate + dihydroxyacetone phosphate = quinolinate + phosphate + 2 H2O + H(+). Its pathway is cofactor biosynthesis; NAD(+) biosynthesis; quinolinate from iminoaspartate: step 1/1. In terms of biological role, catalyzes the condensation of iminoaspartate with dihydroxyacetone phosphate to form quinolinate. The chain is Quinolinate synthase from Cyanothece sp. (strain PCC 7425 / ATCC 29141).